A 351-amino-acid polypeptide reads, in one-letter code: Alcohol dehydrogenase 5 (351 aa).

7 residues coordinate Zn(2+): cysteine 47, histidine 70, cysteine 101, cysteine 104, cysteine 107, cysteine 115, and cysteine 183. NAD(+)-binding positions include 181-187 (GACGGLG), aspartate 205, lysine 210, 272-274 (VGM), and arginine 344.

Belongs to the zinc-containing alcohol dehydrogenase family. Requires Zn(2+) as cofactor.

The catalysed reaction is a primary alcohol + NAD(+) = an aldehyde + NADH + H(+). It carries out the reaction a secondary alcohol + NAD(+) = a ketone + NADH + H(+). In Saccharomyces pastorianus (Lager yeast), this protein is Alcohol dehydrogenase 5 (ADH5).